The following is a 182-amino-acid chain: PRKR-interacting protein 1 homolog (182 aa).

Basic and acidic residues-rich tracts occupy residues 1-18 (MAVENKDARPGKALKKES), 27-43 (PAEEQRLKLERLMRNPD), and 114-124 (IENQKAAEDRT). Disordered stretches follow at residues 1–80 (MAVE…GEFH) and 114–182 (IENQ…MGKR). A required for RNA-binding region spans residues 51 to 143 (KPKEWNPRAP…LKQKKLMAKK (93 aa)). Residues 99-157 (LSEKQKLDEEYKEKLIENQKAAEDRTAKRRKKREKLKQKKLMAKKAKMESQKEEDSEKS) are a coiled coil. Residues 125-143 (AKRRKKREKLKQKKLMAKK) are compositionally biased toward basic residues. The required for nuclear localization stretch occupies residues 126–138 (KRRKKREKLKQKK). Over residues 144-156 (AKMESQKEEDSEK) the composition is skewed to basic and acidic residues. A compositionally biased stretch (acidic residues) spans 164–173 (EGEEKDDDAE).

This sequence belongs to the PRKRIP1 family. As to quaternary structure, component of the pre-catalytic and post-catalytic spliceosome complexes.

The protein resides in the nucleus. The protein localises to the nucleolus. Required for pre-mRNA splicing as component of the spliceosome. Binds double-stranded RNA. The polypeptide is PRKR-interacting protein 1 homolog (prkrip1) (Danio rerio (Zebrafish)).